We begin with the raw amino-acid sequence, 143 residues long: Transcriptional regulator MraZ (143 aa).

SpoVT-AbrB domains lie at 5-47 (EFRH…PMKE) and 76-119 (ATEC…DEAR).

It belongs to the MraZ family. As to quaternary structure, forms oligomers.

It localises to the cytoplasm. The protein resides in the nucleoid. In Enterococcus hirae, this protein is Transcriptional regulator MraZ.